The primary structure comprises 456 residues: L-seryl-tRNA(Sec) selenium transferase (456 aa).

N6-(pyridoxal phosphate)lysine is present on Lys-288.

The protein belongs to the SelA family. It depends on pyridoxal 5'-phosphate as a cofactor.

The protein resides in the cytoplasm. It carries out the reaction L-seryl-tRNA(Sec) + selenophosphate + H(+) = L-selenocysteinyl-tRNA(Sec) + phosphate. It functions in the pathway aminoacyl-tRNA biosynthesis; selenocysteinyl-tRNA(Sec) biosynthesis; selenocysteinyl-tRNA(Sec) from L-seryl-tRNA(Sec) (bacterial route): step 1/1. In terms of biological role, converts seryl-tRNA(Sec) to selenocysteinyl-tRNA(Sec) required for selenoprotein biosynthesis. The protein is L-seryl-tRNA(Sec) selenium transferase of Helicobacter hepaticus (strain ATCC 51449 / 3B1).